The primary structure comprises 285 residues: Bifunctional protein FolD 2 (285 aa).

NADP(+)-binding positions include 164–166 (GRS), Ser189, and Val230.

Belongs to the tetrahydrofolate dehydrogenase/cyclohydrolase family. As to quaternary structure, homodimer.

It carries out the reaction (6R)-5,10-methylene-5,6,7,8-tetrahydrofolate + NADP(+) = (6R)-5,10-methenyltetrahydrofolate + NADPH. It catalyses the reaction (6R)-5,10-methenyltetrahydrofolate + H2O = (6R)-10-formyltetrahydrofolate + H(+). It functions in the pathway one-carbon metabolism; tetrahydrofolate interconversion. Its function is as follows. Catalyzes the oxidation of 5,10-methylenetetrahydrofolate to 5,10-methenyltetrahydrofolate and then the hydrolysis of 5,10-methenyltetrahydrofolate to 10-formyltetrahydrofolate. The protein is Bifunctional protein FolD 2 of Geobacter sulfurreducens (strain ATCC 51573 / DSM 12127 / PCA).